The primary structure comprises 395 residues: Imidazolonepropionase (395 aa).

Residues histidine 63 and histidine 65 each coordinate Fe(3+). Positions 63 and 65 each coordinate Zn(2+). Arginine 72, tyrosine 135, and histidine 168 together coordinate 4-imidazolone-5-propanoate. Tyrosine 135 serves as a coordination point for N-formimidoyl-L-glutamate. Histidine 233 provides a ligand contact to Fe(3+). Residue histidine 233 coordinates Zn(2+). Glutamine 236 contributes to the 4-imidazolone-5-propanoate binding site. Aspartate 308 provides a ligand contact to Fe(3+). Position 308 (aspartate 308) interacts with Zn(2+). Positions 310 and 312 each coordinate N-formimidoyl-L-glutamate. A 4-imidazolone-5-propanoate-binding site is contributed by threonine 313.

The protein belongs to the metallo-dependent hydrolases superfamily. HutI family. It depends on Zn(2+) as a cofactor. Fe(3+) is required as a cofactor.

It localises to the cytoplasm. It catalyses the reaction 4-imidazolone-5-propanoate + H2O = N-formimidoyl-L-glutamate. The protein operates within amino-acid degradation; L-histidine degradation into L-glutamate; N-formimidoyl-L-glutamate from L-histidine: step 3/3. Functionally, catalyzes the hydrolytic cleavage of the carbon-nitrogen bond in imidazolone-5-propanoate to yield N-formimidoyl-L-glutamate. It is the third step in the universal histidine degradation pathway. This chain is Imidazolonepropionase, found in Cereibacter sphaeroides (strain KD131 / KCTC 12085) (Rhodobacter sphaeroides).